The chain runs to 867 residues: MATVTEVLTEPFTAQGVTLKSGPIKVHQEELPAVELSDIPLPPPSKEPTEVLSIDKPTPDYHVPRDPRLIRLTGVHPFNVEPPLTALYDEGFLTSPELFYVRNHGPVPLVKDEDIPNWEISIEGLVEKPLVLNFRDILQQYDQITAPITLVCAGNRRKEQNVVRKTKGFSWGSAGLSTALWTGPMMADILRSAKPLRKAKYVCMEGADKLPNGYYGTSIKLNWAMDPNRGIMLAHKMNGEDLRPDHGRPLRAVVPGQIGGRSVKWLKKLILTDAPSDNWYHIYDNRVLPTMVSPEMSSSDPNWWRDDRYAIYDLNVNSSVVYPEHKEVLDLASAGPSYNVKGYAYAGGGRRITRVEISLDKGKSWRLANISYAEDKYRDFEGDLFGGRVHMSWRETCFCWCFWSLDIAIPELENTDAILVRAMDEALALQPRDMYWSVLGMMNNPWFRVTITKENGTLRFEHPTDPTGPGGWMERVKKAGGDLVNGYWGERQAGEEPTEPEPEKEINMKKEGVNRIIDLQEFKKNSSDEKPWFIVNGEVYDGTAFLEGHPGGAQSIISSAGIDVSEEFLAIHTQTAKAMMPDYHIGTMDKASLEALKNDNAPQSDEPRATFLQSKSWTKATLVKRTDVSWDTRIFTFQLQHDKQTLGLPIGQHLMIKVADPTSKEAIIRSYTPISDTNQEGTMDLLVKIYFDTPTVKGGKMTMALEKLALGSEIDCKGPTGRFEYLGNGKILVSGKERHVSSFKMICGGTGITPIFQVLRAVMQDKQDPTSCVVLDGNRQEEDILCRADLDAYEALDSKKCKVVHTLTKAPDSWTGRRGRISEDLLKEHAIPDGKSMVLICGPEAMEKSARKILLEQGWAESDLHFF.

Residues 38 to 58 (DIPLPPPSKEPTEVLSIDKPT) are disordered. Residue Cys-152 participates in Mo-molybdopterin binding. The region spanning 514–589 (NRIIDLQEFK…MPDYHIGTMD (76 aa)) is the Cytochrome b5 heme-binding domain. His-549 and His-572 together coordinate heme. Positions 615–726 (KSWTKATLVK…KGPTGRFEYL (112 aa)) constitute an FAD-binding FR-type domain. FAD is bound by residues 669–672 (RSYT), 686–690 (LVKIY), Phe-691, 700–702 (KMT), and Thr-753. Residue 837–846 (MVLICGPEAM) coordinates NADP(+).

It belongs to the nitrate reductase family. In terms of assembly, homodimer. The cofactor is FAD. Heme is required as a cofactor. Mo-molybdopterin serves as cofactor.

It catalyses the reaction nitrite + NADP(+) + H2O = nitrate + NADPH + H(+). Its function is as follows. Nitrate reductase is a key enzyme involved in the first step of nitrate assimilation in plants, fungi and bacteria. The chain is Nitrate reductase [NADPH] (niaD) from Aspergillus niger.